The chain runs to 407 residues: Divalent metal cation transporter MntH (407 aa).

11 helical membrane passes run 16 to 36 (LTLL…GNFA), 43 to 63 (STFG…AMLV), 95 to 115 (WVQA…GAAV), 119 to 139 (LLLG…TWGI), 152 to 172 (FVVG…LVFS), 193 to 213 (AVYL…IYLH), 239 to 259 (IAMT…AAAF), 288 to 308 (LFGL…TLAG), 318 to 338 (FTIP…VVIA), 346 to 366 (ILVL…IPLL), and 387 to 407 (VGRL…VAMI).

This sequence belongs to the NRAMP family.

The protein resides in the cell inner membrane. Functionally, h(+)-stimulated, divalent metal cation uptake system. The protein is Divalent metal cation transporter MntH of Aeromonas hydrophila subsp. hydrophila (strain ATCC 7966 / DSM 30187 / BCRC 13018 / CCUG 14551 / JCM 1027 / KCTC 2358 / NCIMB 9240 / NCTC 8049).